A 333-amino-acid chain; its full sequence is Electron transfer flavoprotein subunit alpha, mitochondrial (333 aa).

A mitochondrion-targeting transit peptide spans 1–19 (MFRAAAPGQLRRAASLLRF). The tract at residues 20–204 (QSTLVIAEHA…GISEWLDQKL (185 aa)) is domain I. An N6-acetyllysine; alternate modification is found at Lys59. Lys59 is modified (N6-succinyllysine; alternate). Lys62 is modified (N6-acetyllysine). Lys69 bears the N6-acetyllysine; alternate mark. An N6-succinyllysine; alternate modification is found at Lys69. At Lys75 the chain carries N6-acetyllysine. N6-acetyllysine; alternate is present on Lys85. An N6-succinyllysine; alternate modification is found at Lys85. Thr93 carries the phosphothreonine modification. Residues Lys101 and Lys139 each carry the N6-acetyllysine modification. The residue at position 140 (Ser140) is a Phosphoserine. The residue at position 158 (Lys158) is an N6-acetyllysine; alternate. Lys158 is subject to N6-succinyllysine; alternate. N6-acetyllysine is present on Lys164. Position 187 is an N6-succinyllysine (Lys187). Lys203 is subject to N6-acetyllysine; alternate. Lys203 is modified (N6-succinyllysine; alternate). Residues 205-333 (TKSDRPELTG…PEMTEILKKK (129 aa)) are domain II. At Lys216 the chain carries N6-succinyllysine. Arg223 contacts FAD. 2 positions are modified to N6-acetyllysine; alternate: Lys226 and Lys232. N6-succinyllysine; alternate occurs at positions 226 and 232. FAD contacts are provided by residues Ser248, 263–266 (VGQT), 281–286 (SGAIQH), and Asn300. Lys301 carries the N6-succinyllysine modification. An FAD-binding site is contributed by 318-319 (DL).

It belongs to the ETF alpha-subunit/FixB family. Heterodimer composed of ETFA and ETFB. Identified in a complex that contains ETFA, ETFB and ETFRF1. Interaction with ETFRF1 promotes dissociation of the bound FAD and loss of electron transfer activity. Interacts with TASOR. It depends on FAD as a cofactor. In terms of tissue distribution, expressed in the spermatogonia, spermatocytes, ovary and granular cells within the cerebellum.

The protein localises to the mitochondrion matrix. Heterodimeric electron transfer flavoprotein that accepts electrons from several mitochondrial dehydrogenases, including acyl-CoA dehydrogenases, glutaryl-CoA and sarcosine dehydrogenase. It transfers the electrons to the main mitochondrial respiratory chain via ETF-ubiquinone oxidoreductase (ETF dehydrogenase). Required for normal mitochondrial fatty acid oxidation and normal amino acid metabolism. In Mus musculus (Mouse), this protein is Electron transfer flavoprotein subunit alpha, mitochondrial (Etfa).